A 511-amino-acid chain; its full sequence is Dihydrolipoyl dehydrogenase, mitochondrial (511 aa).

Residues 75–84, Lys-93, Gly-157, and 187–189 each bind FAD; these read EKRGTLGGTC and TGS. Cys-84 and Cys-89 are joined by a disulfide. NAD(+)-binding positions include 224 to 231, Glu-247, Leu-281, and Gly-316; that span reads GGGIIGLE. FAD contacts are provided by residues Asp-357 and 363–366; that span reads MLAH. The active-site Proton acceptor is His-489.

Belongs to the class-I pyridine nucleotide-disulfide oxidoreductase family. As to quaternary structure, homodimer. FAD serves as cofactor.

It is found in the mitochondrion matrix. It catalyses the reaction N(6)-[(R)-dihydrolipoyl]-L-lysyl-[protein] + NAD(+) = N(6)-[(R)-lipoyl]-L-lysyl-[protein] + NADH + H(+). Its function is as follows. Lipoamide dehydrogenase is a component of the alpha-ketoacid dehydrogenase complexes. Malfunction of this protein blocks the progression of cell cycle from G1 to S phase. The chain is Dihydrolipoyl dehydrogenase, mitochondrial (dld1) from Schizosaccharomyces pombe (strain 972 / ATCC 24843) (Fission yeast).